A 358-amino-acid chain; its full sequence is MRERLLAAEKVTAIRWQGGALHLLDQRLLPSQERWLACDNVAQVAAAIRDMVVRGASAIGIAAAYGLVLALEERLAQGGDWEMDLEEDFLTLAEARPTAANLFWALNRMRERLLRLRADEDVLAALEAEAVAIHESDREANLTMSQQGIELIRRHQGNAQALLTYGNAGALASGGFGTALGVIRAGYLEGMVERVYAGETRPWLQGSRLTAWELANEGIPVTLCADSALAHLMKTKGITWVVVGADCIAANGDVASKIGTYQLAVSAMHHGVRFMVVAPSTSIDLNLATGEDIPLEERDADEWLDFGGAPAVPDVEVFNPVFDVTPADLIDVIVTERGIVERPDTAKLAQLICRKRLH.

Substrate contacts are provided by residues 54–56, arginine 96, and glutamine 205; that span reads RGA. The active-site Proton donor is aspartate 246. 256–257 contacts substrate; it reads SK.

This sequence belongs to the eIF-2B alpha/beta/delta subunits family. MtnA subfamily.

The enzyme catalyses 5-(methylsulfanyl)-alpha-D-ribose 1-phosphate = 5-(methylsulfanyl)-D-ribulose 1-phosphate. Its pathway is amino-acid biosynthesis; L-methionine biosynthesis via salvage pathway; L-methionine from S-methyl-5-thio-alpha-D-ribose 1-phosphate: step 1/6. Functionally, catalyzes the interconversion of methylthioribose-1-phosphate (MTR-1-P) into methylthioribulose-1-phosphate (MTRu-1-P). This chain is Methylthioribose-1-phosphate isomerase, found in Pseudomonas putida (strain GB-1).